We begin with the raw amino-acid sequence, 385 residues long: 1-deoxy-D-xylulose 5-phosphate reductoisomerase (385 aa).

The NADPH site is built by T11, G12, S13, I14, N39, and N123. 1-deoxy-D-xylulose 5-phosphate is bound at residue K124. E125 contacts NADPH. D149 serves as a coordination point for Mn(2+). Positions 150, 151, 174, and 197 each coordinate 1-deoxy-D-xylulose 5-phosphate. E151 serves as a coordination point for Mn(2+). G203 provides a ligand contact to NADPH. 4 residues coordinate 1-deoxy-D-xylulose 5-phosphate: S210, N215, K216, and E219. A Mn(2+)-binding site is contributed by E219.

The protein belongs to the DXR family. The cofactor is Mg(2+). Requires Mn(2+) as cofactor.

It carries out the reaction 2-C-methyl-D-erythritol 4-phosphate + NADP(+) = 1-deoxy-D-xylulose 5-phosphate + NADPH + H(+). It participates in isoprenoid biosynthesis; isopentenyl diphosphate biosynthesis via DXP pathway; isopentenyl diphosphate from 1-deoxy-D-xylulose 5-phosphate: step 1/6. Catalyzes the NADPH-dependent rearrangement and reduction of 1-deoxy-D-xylulose-5-phosphate (DXP) to 2-C-methyl-D-erythritol 4-phosphate (MEP). The polypeptide is 1-deoxy-D-xylulose 5-phosphate reductoisomerase (Porphyromonas gingivalis (strain ATCC 33277 / DSM 20709 / CIP 103683 / JCM 12257 / NCTC 11834 / 2561)).